Reading from the N-terminus, the 117-residue chain is Small ribosomal subunit protein bS6 (117 aa).

The protein belongs to the bacterial ribosomal protein bS6 family.

Its function is as follows. Binds together with bS18 to 16S ribosomal RNA. This chain is Small ribosomal subunit protein bS6, found in Porphyromonas gingivalis (strain ATCC BAA-308 / W83).